The chain runs to 103 residues: Large ribosomal subunit protein bL21 (103 aa).

It belongs to the bacterial ribosomal protein bL21 family. In terms of assembly, part of the 50S ribosomal subunit. Contacts protein L20.

This protein binds to 23S rRNA in the presence of protein L20. In Ectopseudomonas mendocina (strain ymp) (Pseudomonas mendocina), this protein is Large ribosomal subunit protein bL21.